The chain runs to 407 residues: Transcriptional regulator ICP22 homolog (407 aa).

The interval 34 to 268 (RKRRRKLKPQ…STQPGGVPKL (235 aa)) is disordered. The segment covering 81–241 (EREGEGGEEG…EEAEEEEEEA (161 aa)) has biased composition (acidic residues).

It belongs to the herpesviridae ICP22 family.

This Saimiriine herpesvirus 2 (strain 11) (SaHV-2) protein is Transcriptional regulator ICP22 homolog (73).